Consider the following 209-residue polypeptide: Thiamine-phosphate synthase (209 aa).

Residues 38 to 42 (QLREK) and N70 contribute to the 4-amino-2-methyl-5-(diphosphooxymethyl)pyrimidine site. Positions 71 and 90 each coordinate Mg(2+). Position 109 (S109) interacts with 4-amino-2-methyl-5-(diphosphooxymethyl)pyrimidine. 135–137 (TPT) serves as a coordination point for 2-[(2R,5Z)-2-carboxy-4-methylthiazol-5(2H)-ylidene]ethyl phosphate. A 4-amino-2-methyl-5-(diphosphooxymethyl)pyrimidine-binding site is contributed by K138. 2-[(2R,5Z)-2-carboxy-4-methylthiazol-5(2H)-ylidene]ethyl phosphate-binding positions include G166 and 186-187 (IS).

Belongs to the thiamine-phosphate synthase family. Mg(2+) serves as cofactor.

The catalysed reaction is 2-[(2R,5Z)-2-carboxy-4-methylthiazol-5(2H)-ylidene]ethyl phosphate + 4-amino-2-methyl-5-(diphosphooxymethyl)pyrimidine + 2 H(+) = thiamine phosphate + CO2 + diphosphate. The enzyme catalyses 2-(2-carboxy-4-methylthiazol-5-yl)ethyl phosphate + 4-amino-2-methyl-5-(diphosphooxymethyl)pyrimidine + 2 H(+) = thiamine phosphate + CO2 + diphosphate. It carries out the reaction 4-methyl-5-(2-phosphooxyethyl)-thiazole + 4-amino-2-methyl-5-(diphosphooxymethyl)pyrimidine + H(+) = thiamine phosphate + diphosphate. The protein operates within cofactor biosynthesis; thiamine diphosphate biosynthesis; thiamine phosphate from 4-amino-2-methyl-5-diphosphomethylpyrimidine and 4-methyl-5-(2-phosphoethyl)-thiazole: step 1/1. Its function is as follows. Condenses 4-methyl-5-(beta-hydroxyethyl)thiazole monophosphate (THZ-P) and 2-methyl-4-amino-5-hydroxymethyl pyrimidine pyrophosphate (HMP-PP) to form thiamine monophosphate (TMP). The polypeptide is Thiamine-phosphate synthase (Syntrophomonas wolfei subsp. wolfei (strain DSM 2245B / Goettingen)).